We begin with the raw amino-acid sequence, 379 residues long: UDP-4-amino-4-deoxy-L-arabinose--oxoglutarate aminotransferase (379 aa).

Lys-182 carries the N6-(pyridoxal phosphate)lysine modification.

Belongs to the DegT/DnrJ/EryC1 family. ArnB subfamily. Homodimer. Pyridoxal 5'-phosphate serves as cofactor.

It catalyses the reaction UDP-4-amino-4-deoxy-beta-L-arabinose + 2-oxoglutarate = UDP-beta-L-threo-pentopyranos-4-ulose + L-glutamate. It functions in the pathway nucleotide-sugar biosynthesis; UDP-4-deoxy-4-formamido-beta-L-arabinose biosynthesis; UDP-4-deoxy-4-formamido-beta-L-arabinose from UDP-alpha-D-glucuronate: step 2/3. The protein operates within bacterial outer membrane biogenesis; lipopolysaccharide biosynthesis. Its function is as follows. Catalyzes the conversion of UDP-4-keto-arabinose (UDP-Ara4O) to UDP-4-amino-4-deoxy-L-arabinose (UDP-L-Ara4N). The modified arabinose is attached to lipid A and is required for resistance to polymyxin and cationic antimicrobial peptides. The sequence is that of UDP-4-amino-4-deoxy-L-arabinose--oxoglutarate aminotransferase from Escherichia coli O157:H7.